The sequence spans 443 residues: Leucine/methionine racemase (443 aa).

Pyridoxal 5'-phosphate contacts are provided by residues 110 to 111 (GS) and glutamine 247. An N6-(pyridoxal phosphate)lysine modification is found at lysine 273. Residue threonine 302 coordinates pyridoxal 5'-phosphate.

This sequence belongs to the class-III pyridoxal-phosphate-dependent aminotransferase family. Pyridoxal 5'-phosphate is required as a cofactor.

It carries out the reaction L-leucine = D-leucine. The catalysed reaction is L-methionine = D-methionine. With respect to regulation, activity is strongly inhibited by several metal ions, including Co(2+), Zn(2+), Ni(2+), Cu(2+) and Fe(3+), and nonsubstrate amino acids such as L-arginine and L-lysine. Activity is completely abolished in the presence of hydroxylamine, an inhibitor of pyridoxal phosphate-dependent enzymes. Amino acid racemase with moderate substrate specificity. Is primarily active toward leucine, which is the preferred substrate, and methionine. Also exhibits lower levels of activity toward phenylalanine, alanine and serine. This Thermococcus litoralis (strain ATCC 51850 / DSM 5473 / JCM 8560 / NS-C) protein is Leucine/methionine racemase.